A 327-amino-acid polypeptide reads, in one-letter code: DNA-directed RNA polymerase subunit alpha (327 aa).

An alpha N-terminal domain (alpha-NTD) region spans residues 1 to 231; it reads MIYQMQMPAK…DHVTFFANFS (231 aa). The tract at residues 252 to 327 is alpha C-terminal domain (alpha-CTD); that stretch reads MRRLFHTKIE…GMDITKYQMK (76 aa).

Belongs to the RNA polymerase alpha chain family. Homodimer. The RNAP catalytic core consists of 2 alpha, 1 beta, 1 beta' and 1 omega subunit. When a sigma factor is associated with the core the holoenzyme is formed, which can initiate transcription.

The catalysed reaction is RNA(n) + a ribonucleoside 5'-triphosphate = RNA(n+1) + diphosphate. Its function is as follows. DNA-dependent RNA polymerase catalyzes the transcription of DNA into RNA using the four ribonucleoside triphosphates as substrates. In Pelodictyon phaeoclathratiforme (strain DSM 5477 / BU-1), this protein is DNA-directed RNA polymerase subunit alpha.